Reading from the N-terminus, the 545-residue chain is CTP synthase (545 aa).

The amidoligase domain stretch occupies residues 1–266 (MTTKYIFVTG…DSYFTERFGL (266 aa)). Serine 14 is a CTP binding site. UTP is bound at residue serine 14. Residues 15 to 20 (SLGKGI) and aspartate 72 each bind ATP. Aspartate 72 and glutamate 140 together coordinate Mg(2+). CTP contacts are provided by residues 147-149 (DIE), 187-192 (KTKPTQ), and lysine 223. UTP is bound by residues 187–192 (KTKPTQ) and lysine 223. An ATP-binding site is contributed by 239–241 (KDV). A Glutamine amidotransferase type-1 domain is found at 291–542 (TIGMVGKYVS…VKAAGEYQKR (252 aa)). Glycine 352 lines the L-glutamine pocket. Cysteine 379 (nucleophile; for glutamine hydrolysis) is an active-site residue. L-glutamine is bound by residues 380–383 (LGMQ), glutamate 403, and arginine 470. Catalysis depends on residues histidine 515 and glutamate 517.

It belongs to the CTP synthase family. Homotetramer.

It carries out the reaction UTP + L-glutamine + ATP + H2O = CTP + L-glutamate + ADP + phosphate + 2 H(+). The catalysed reaction is L-glutamine + H2O = L-glutamate + NH4(+). The enzyme catalyses UTP + NH4(+) + ATP = CTP + ADP + phosphate + 2 H(+). Its pathway is pyrimidine metabolism; CTP biosynthesis via de novo pathway; CTP from UDP: step 2/2. Its activity is regulated as follows. Allosterically activated by GTP, when glutamine is the substrate; GTP has no effect on the reaction when ammonia is the substrate. The allosteric effector GTP functions by stabilizing the protein conformation that binds the tetrahedral intermediate(s) formed during glutamine hydrolysis. Inhibited by the product CTP, via allosteric rather than competitive inhibition. In terms of biological role, catalyzes the ATP-dependent amination of UTP to CTP with either L-glutamine or ammonia as the source of nitrogen. Regulates intracellular CTP levels through interactions with the four ribonucleotide triphosphates. The chain is CTP synthase from Aeromonas hydrophila subsp. hydrophila (strain ATCC 7966 / DSM 30187 / BCRC 13018 / CCUG 14551 / JCM 1027 / KCTC 2358 / NCIMB 9240 / NCTC 8049).